We begin with the raw amino-acid sequence, 738 residues long: Polyphosphate kinase (738 aa).

The disordered stretch occupies residues 1-48 (MIGNDRWVTEIETGPVTEARPDTNAREPGDRTPAAPPAATPAATTDQL). A compositionally biased stretch (basic and acidic residues) spans 19-30 (ARPDTNAREPGD). Asn91 contributes to the ATP binding site. Mg(2+) is bound by residues Arg427 and Arg457. His487 acts as the Phosphohistidine intermediate in catalysis. Positions 520, 620, and 648 each coordinate ATP.

This sequence belongs to the polyphosphate kinase 1 (PPK1) family. Mg(2+) serves as cofactor. An intermediate of this reaction is the autophosphorylated ppk in which a phosphate is covalently linked to a histidine residue through a N-P bond.

It catalyses the reaction [phosphate](n) + ATP = [phosphate](n+1) + ADP. Catalyzes the reversible transfer of the terminal phosphate of ATP to form a long-chain polyphosphate (polyP). The sequence is that of Polyphosphate kinase from Mycobacterium ulcerans (strain Agy99).